The primary structure comprises 434 residues: GTPase Der (434 aa).

EngA-type G domains lie at 3-167 (NIVA…PEIE) and 175-350 (PRFA…ESRS). Residues 9 to 16 (GRPNVGKS), 56 to 60 (DTGGY), 119 to 122 (NKVD), 181 to 188 (GRPNAGKS), 228 to 232 (DTAGI), and 293 to 296 (NKWD) contribute to the GTP site. A KH-like domain is found at 351–434 (KKIKTRQFND…VPISIFFRKK (84 aa)).

It belongs to the TRAFAC class TrmE-Era-EngA-EngB-Septin-like GTPase superfamily. EngA (Der) GTPase family. In terms of assembly, associates with the 50S ribosomal subunit.

In terms of biological role, GTPase that plays an essential role in the late steps of ribosome biogenesis. The chain is GTPase Der from Christiangramia forsetii (strain DSM 17595 / CGMCC 1.15422 / KT0803) (Gramella forsetii).